A 489-amino-acid polypeptide reads, in one-letter code: uncharacterized protein (489 aa).

A run of 13 helical transmembrane segments spans residues 1-21 (MNAALIIIFGVLLLSIFLGIR), 40-60 (FGTVFVFLLMAGEIYTTFTFL), 74-94 (FYIIAYGCLAYILSYWLLPAV), 117-137 (PLLGILVSLVGIAALIPYLVL), 158-178 (AAIWIGAVSITVYVMVSGIHG), 188-208 (IMILVVVLFLGVYLPIHYYGG), 234-254 (AWFSSTVLLTALGFYMWPHTF), 271-291 (IIMPLYQLVLLFVLFVGFAAI), 318-338 (FVGIIGAAGLLTALVPGSMIL), 362-382 (VSALAKFLVPVIALISVYFTF), 388-408 (IVTLLLMGYSLVTQLFPALLF), 422-442 (FAGIIAGVGAVTYITMTETTI), and 456-476 (LNVGIVALLLNITVMMAVSLM).

Belongs to the sodium:solute symporter (SSF) (TC 2.A.21) family.

It is found in the cell membrane. This is an uncharacterized protein from Bacillus subtilis (strain 168).